Consider the following 366-residue polypeptide: Beta sliding clamp (366 aa).

Belongs to the beta sliding clamp family. In terms of assembly, forms a ring-shaped head-to-tail homodimer around DNA which binds and tethers DNA polymerases and other proteins to the DNA. The DNA replisome complex has a single clamp-loading complex (3 tau and 1 each of delta, delta', psi and chi subunits) which binds 3 Pol III cores (1 core on the leading strand and 2 on the lagging strand) each with a beta sliding clamp dimer. Additional proteins in the replisome are other copies of gamma, psi and chi, Ssb, DNA helicase and RNA primase.

Its subcellular location is the cytoplasm. Functionally, confers DNA tethering and processivity to DNA polymerases and other proteins. Acts as a clamp, forming a ring around DNA (a reaction catalyzed by the clamp-loading complex) which diffuses in an ATP-independent manner freely and bidirectionally along dsDNA. Initially characterized for its ability to contact the catalytic subunit of DNA polymerase III (Pol III), a complex, multichain enzyme responsible for most of the replicative synthesis in bacteria; Pol III exhibits 3'-5' exonuclease proofreading activity. The beta chain is required for initiation of replication as well as for processivity of DNA replication. This is Beta sliding clamp (dnaN) from Buchnera aphidicola subsp. Acyrthosiphon pisum (strain APS) (Acyrthosiphon pisum symbiotic bacterium).